The following is a 218-amino-acid chain: Large ribosomal subunit protein uL3 (218 aa).

The protein belongs to the universal ribosomal protein uL3 family. As to quaternary structure, part of the 50S ribosomal subunit. Forms a cluster with proteins L14 and L19.

Its function is as follows. One of the primary rRNA binding proteins, it binds directly near the 3'-end of the 23S rRNA, where it nucleates assembly of the 50S subunit. The protein is Large ribosomal subunit protein uL3 of Corynebacterium jeikeium (strain K411).